We begin with the raw amino-acid sequence, 559 residues long: Membrane protein insertase YidC (559 aa).

A helical transmembrane segment spans residues 7 to 24 (ILWVIFSMSLVLLYDNWQ). Composition is skewed to low complexity over residues 45–55 (APAASGAAAQG) and 63–82 (QPATGTSAAPAAGAAPQAAA). The disordered stretch occupies residues 45 to 82 (APAASGAAAQGDVPKANVQPATGTSAAPAAGAAPQAAA). 5 consecutive transmembrane segments (helical) span residues 338 to 358 (LELVKDYGWLTILAKPLFWLL), 364 to 384 (FLGNWGWSIIALTVLIKLVFF), 434 to 454 (LGGCLPIVIQIPVFIALYWVL), 472 to 492 (LSVPDPFYILPIVMAVSMFVQ), and 507 to 527 (VMMIMPLVFSVMFFFFPAGLV).

The protein belongs to the OXA1/ALB3/YidC family. Type 1 subfamily. As to quaternary structure, interacts with the Sec translocase complex via SecD. Specifically interacts with transmembrane segments of nascent integral membrane proteins during membrane integration.

The protein resides in the cell inner membrane. In terms of biological role, required for the insertion and/or proper folding and/or complex formation of integral membrane proteins into the membrane. Involved in integration of membrane proteins that insert both dependently and independently of the Sec translocase complex, as well as at least some lipoproteins. Aids folding of multispanning membrane proteins. This chain is Membrane protein insertase YidC, found in Cupriavidus taiwanensis (strain DSM 17343 / BCRC 17206 / CCUG 44338 / CIP 107171 / LMG 19424 / R1) (Ralstonia taiwanensis (strain LMG 19424)).